Consider the following 316-residue polypeptide: 4-hydroxy-3-methylbut-2-enyl diphosphate reductase (316 aa).

Residue Cys-12 coordinates [4Fe-4S] cluster. (2E)-4-hydroxy-3-methylbut-2-enyl diphosphate is bound by residues His-41 and His-74. Positions 41 and 74 each coordinate dimethylallyl diphosphate. Isopentenyl diphosphate is bound by residues His-41 and His-74. Residue Cys-96 participates in [4Fe-4S] cluster binding. Position 124 (His-124) interacts with (2E)-4-hydroxy-3-methylbut-2-enyl diphosphate. A dimethylallyl diphosphate-binding site is contributed by His-124. Isopentenyl diphosphate is bound at residue His-124. Glu-126 (proton donor) is an active-site residue. Thr-167 is a binding site for (2E)-4-hydroxy-3-methylbut-2-enyl diphosphate. Cys-197 is a [4Fe-4S] cluster binding site. Residues Ser-225, Ser-226, Asn-227, and Ser-269 each contribute to the (2E)-4-hydroxy-3-methylbut-2-enyl diphosphate site. Dimethylallyl diphosphate contacts are provided by Ser-225, Ser-226, Asn-227, and Ser-269. Ser-225, Ser-226, Asn-227, and Ser-269 together coordinate isopentenyl diphosphate.

The protein belongs to the IspH family. Homodimer. It depends on [4Fe-4S] cluster as a cofactor.

The catalysed reaction is isopentenyl diphosphate + 2 oxidized [2Fe-2S]-[ferredoxin] + H2O = (2E)-4-hydroxy-3-methylbut-2-enyl diphosphate + 2 reduced [2Fe-2S]-[ferredoxin] + 2 H(+). It carries out the reaction dimethylallyl diphosphate + 2 oxidized [2Fe-2S]-[ferredoxin] + H2O = (2E)-4-hydroxy-3-methylbut-2-enyl diphosphate + 2 reduced [2Fe-2S]-[ferredoxin] + 2 H(+). It participates in isoprenoid biosynthesis; dimethylallyl diphosphate biosynthesis; dimethylallyl diphosphate from (2E)-4-hydroxy-3-methylbutenyl diphosphate: step 1/1. Its pathway is isoprenoid biosynthesis; isopentenyl diphosphate biosynthesis via DXP pathway; isopentenyl diphosphate from 1-deoxy-D-xylulose 5-phosphate: step 6/6. Catalyzes the conversion of 1-hydroxy-2-methyl-2-(E)-butenyl 4-diphosphate (HMBPP) into a mixture of isopentenyl diphosphate (IPP) and dimethylallyl diphosphate (DMAPP). Acts in the terminal step of the DOXP/MEP pathway for isoprenoid precursor biosynthesis. This Salmonella paratyphi B (strain ATCC BAA-1250 / SPB7) protein is 4-hydroxy-3-methylbut-2-enyl diphosphate reductase.